Consider the following 240-residue polypeptide: Fatty acid metabolism regulator protein (240 aa).

The HTH gntR-type domain occupies 6-74 (KGPASFAEKY…HGKPTRVNNF (69 aa)). The H-T-H motif DNA-binding region spans 34-53 (ERELSELIGVTRTTLREVLQ).

In terms of assembly, homodimer.

It localises to the cytoplasm. Multifunctional regulator of fatty acid metabolism. This chain is Fatty acid metabolism regulator protein, found in Shewanella amazonensis (strain ATCC BAA-1098 / SB2B).